A 235-amino-acid polypeptide reads, in one-letter code: Chalcone--flavanone isomerase 1 (235 aa).

The substrate site is built by Thr-50 and Ser-192.

It belongs to the chalcone isomerase family.

It catalyses the reaction a chalcone = a flavanone.. It participates in secondary metabolite biosynthesis; flavonoid biosynthesis. Functionally, catalyzes the intramolecular cyclization of bicyclic chalcones into tricyclic (S)-flavanones. Responsible for the isomerization of 4,2',4',6'-tetrahydroxychalcone (also termed chalcone) into naringenin. The chain is Chalcone--flavanone isomerase 1 (CHI1) from Chrysanthemum morifolium (Florist's daisy).